The primary structure comprises 300 residues: Sodium/potassium/calcium exchanger 1 (300 aa).

Residues 1-251 (DPGSQGVGAE…ENEQPLSLEW (251 aa)) are disordered. Acidic residues-rich tracts occupy residues 92–102 (GEVEGDEDEGE), 109–119 (GEVEGDEDEGE), 126–136 (GEVEGDEDEGE), 158–175 (GEVE…DEGE), and 215–244 (GDSE…EENE). Residues 259–275 (AIYLFLLPIVFPLWLTV) traverse the membrane as a helical segment.

The protein belongs to the Ca(2+):cation antiporter (CaCA) (TC 2.A.19) family. SLC24A subfamily. The uncleaved signal sequence is required for efficient membrane targeting and proper membrane integration and topology.

Its subcellular location is the cell membrane. The catalysed reaction is Ca(2+)(out) + K(+)(out) + 4 Na(+)(in) = Ca(2+)(in) + K(+)(in) + 4 Na(+)(out). In terms of biological role, calcium, potassium:sodium antiporter that transports 1 Ca(2+) and 1 K(+) in exchange for 4 Na(+). Critical component of the visual transduction cascade, controlling the calcium concentration of outer segments during light and darkness. Light causes a rapid lowering of cytosolic free calcium in the outer segment of both retinal rod and cone photoreceptors and the light-induced lowering of calcium is caused by extrusion via this protein which plays a key role in the process of light adaptation. This is Sodium/potassium/calcium exchanger 1 (SLC24A1) from Bison bison (American bison).